We begin with the raw amino-acid sequence, 473 residues long: Ribulose bisphosphate carboxylase large chain (473 aa).

The residue at position 8 (K8) is an N6,N6,N6-trimethyllysine. Positions 117 and 167 each coordinate substrate. Catalysis depends on K169, which acts as the Proton acceptor. Position 171 (K171) interacts with substrate. 3 residues coordinate Mg(2+): K195, D197, and E198. K195 is subject to N6-carboxylysine. H288 serves as the catalytic Proton acceptor. The substrate site is built by R289, H321, and S373.

The protein belongs to the RuBisCO large chain family. Type I subfamily. Heterohexadecamer of 8 large chains and 8 small chains; disulfide-linked. The disulfide link is formed within the large subunit homodimers. It depends on Mg(2+) as a cofactor. In terms of processing, the disulfide bond which can form in the large chain dimeric partners within the hexadecamer appears to be associated with oxidative stress and protein turnover.

The protein localises to the plastid. The protein resides in the chloroplast. The enzyme catalyses 2 (2R)-3-phosphoglycerate + 2 H(+) = D-ribulose 1,5-bisphosphate + CO2 + H2O. The catalysed reaction is D-ribulose 1,5-bisphosphate + O2 = 2-phosphoglycolate + (2R)-3-phosphoglycerate + 2 H(+). Its function is as follows. RuBisCO catalyzes two reactions: the carboxylation of D-ribulose 1,5-bisphosphate, the primary event in carbon dioxide fixation, as well as the oxidative fragmentation of the pentose substrate in the photorespiration process. Both reactions occur simultaneously and in competition at the same active site. The polypeptide is Ribulose bisphosphate carboxylase large chain (Amorphophallus titanum (Titan arum)).